The sequence spans 649 residues: Acetyl-coenzyme A synthetase (649 aa).

Residues 190–193 (RGGR) and Thr-310 each bind CoA. ATP-binding positions include 386-388 (GEP), 410-415 (DTWWQT), Asp-499, and Arg-514. A CoA-binding site is contributed by Ser-522. Arg-525 is a binding site for ATP. Mg(2+) contacts are provided by Val-536, His-538, and Val-541. Position 583 (Arg-583) interacts with CoA. N6-acetyllysine is present on Lys-608.

It belongs to the ATP-dependent AMP-binding enzyme family. Requires Mg(2+) as cofactor. Post-translationally, acetylated. Deacetylation by the SIR2-homolog deacetylase activates the enzyme.

The enzyme catalyses acetate + ATP + CoA = acetyl-CoA + AMP + diphosphate. In terms of biological role, catalyzes the conversion of acetate into acetyl-CoA (AcCoA), an essential intermediate at the junction of anabolic and catabolic pathways. AcsA undergoes a two-step reaction. In the first half reaction, AcsA combines acetate with ATP to form acetyl-adenylate (AcAMP) intermediate. In the second half reaction, it can then transfer the acetyl group from AcAMP to the sulfhydryl group of CoA, forming the product AcCoA. The chain is Acetyl-coenzyme A synthetase from Methylorubrum populi (strain ATCC BAA-705 / NCIMB 13946 / BJ001) (Methylobacterium populi).